We begin with the raw amino-acid sequence, 625 residues long: Protein LEO1 homolog (625 aa).

Disordered regions lie at residues 1-214 and 415-625; these read MVKG…DMVL and EREK…SDED. Acidic residues-rich tracts occupy residues 40-55 and 63-80; these read DEAE…GEAE and EAES…PGES. Basic and acidic residues-rich tracts occupy residues 97 to 113, 121 to 137, and 182 to 197; these read SEAR…EHGG, QEVV…KHYE, and EYVR…RSPI. The residue at position 203 (S203) is a Phosphoserine. Basic and acidic residues predominate over residues 415 to 425; it reads EREKEKREKAE. The stretch at 415 to 539 forms a coiled coil; it reads EREKEKREKA…ETEEEEEEKS (125 aa). The span at 426–436 shows a compositional bias: polar residues; the sequence is SQNLKASTKLS. The span at 471–491 shows a compositional bias: basic and acidic residues; it reads YRSNRGYEEDLEAEAQRERRI. Residues 492–501 show a composition bias toward basic residues; it reads LNAKKSHKGI. Residues 523 to 537 are compositionally biased toward acidic residues; the sequence is EREESEYETEEEEEE. Residues 538-547 show a composition bias toward basic and acidic residues; it reads KSPARGRGKD. A phosphoserine mark is found at S548, S570, S600, S605, and S622. Positions 548–561 are enriched in acidic residues; it reads SEDEYEEDAEEDEE.

The protein belongs to the LEO1 family. In terms of assembly, component of the nuclear PAF1 complex (PAF1C), which consists of VIP2/ELF7/PAF1, VIP3/SKI8/WDR61, VIP4/LEO1, VIP5/RTF1, VIP6/ELF8/CTR9 and CDC73. Interacts with VIP3 and VIP6. In terms of tissue distribution, expressed in roots, shoot apices, stems, cauline leaves, inflorescence apices and flowers.

The protein localises to the nucleus. In terms of biological role, component of the PAF1 complex (PAF1C) which is involved in histone modifications such as methylation on histone H3 'Lys-4' (H3K4me3). Involved in regulation of flowering time. Required for the expression of the flowering repressor and MADS box gene FLC. Involved in the control of seed dormancy and germination. This chain is Protein LEO1 homolog, found in Arabidopsis thaliana (Mouse-ear cress).